The following is a 94-amino-acid chain: Small ribosomal subunit protein bS6 (94 aa).

Belongs to the bacterial ribosomal protein bS6 family.

Its function is as follows. Binds together with bS18 to 16S ribosomal RNA. This is Small ribosomal subunit protein bS6 from Alkaliphilus metalliredigens (strain QYMF).